Here is a 246-residue protein sequence, read N- to C-terminus: Acetoacetate decarboxylase (246 aa).

The active-site Schiff-base intermediate with acetoacetate is the K116.

The protein belongs to the ADC family.

The enzyme catalyses acetoacetate + H(+) = acetone + CO2. Its function is as follows. Catalyzes the conversion of acetoacetate to acetone and carbon dioxide. This chain is Acetoacetate decarboxylase, found in Burkholderia ambifaria (strain MC40-6).